The sequence spans 303 residues: Sushi domain-containing protein 6 (303 aa).

The N-terminal stretch at 1–39 is a signal peptide; it reads MCHGRIAPKSTSVFAVASVGHGVFLPLVILCTLLGDGLA. A Sushi domain is found at 40 to 104; the sequence is SVCPLPPEPE…KPAMEISCRL (65 aa). The Extracellular segment spans residues 40–120; sequence SVCPLPPEPE…HTSLGVPTLS (81 aa). 2 disulfides stabilise this stretch: Cys-42-Cys-89 and Cys-74-Cys-102. A helical membrane pass occupies residues 121–141; it reads IVASTASSVALILLLVVLFVL. Over 142-303 the chain is Cytoplasmic; it reads LQPKLKSFHH…TDDIPLLKEA (162 aa). Disordered regions lie at residues 199–237 and 263–282; these read VLSE…GQSG and GSGN…NSDI.

The protein localises to the membrane. Its function is as follows. May play a role in growth-suppressive activity and cell death. May be involved in the production of chemokine molecules in umbilical vein endothelial cells (HUVECs) cultured in THP1 monocyte LPS-induced medium. Plays a role in preventing tumor onset. The polypeptide is Sushi domain-containing protein 6 (Homo sapiens (Human)).